Consider the following 54-residue polypeptide: uncharacterized protein (54 aa).

Residues 23-35 (DVMQEGETAKELN) show a composition bias toward basic and acidic residues. The tract at residues 23–54 (DVMQEGETAKELNYEGEDMQATSSAQNRQTSV) is disordered. The span at 42–54 (QATSSAQNRQTSV) shows a compositional bias: polar residues.

This is an uncharacterized protein from Bacillus subtilis (strain 168).